The chain runs to 412 residues: MNNSRVEGSSGRAARKLRFALMGPAFIAAIGYIDPGNFATNIQAGASFGYKLLWVVVWANLMAMLIQVLSAKLGIATGKNLAEQIRDHYPRPVVWFYWVQAEIIAMATDLAEFIGAAIGFKLILGVSLLQGAVLTGIATFLILMLQRRGQKPLELVIGGLLLFVAAAYIVELVFSQPNLVQLSKGMAIPSLPTSEAVFLAAGVLGATIMPHVIYLHSSLTQNAHDGTRQERYSATKWDVGIAMTIAGFVNLAMMATAAAAFHFNGHTGVADLDQAYLTLEPLLSHAAATIFGLSLVAAGLSSTVVGTLAGQVVMQGFVRFHIPLWVRRSVTMMPSFIVILMGLDPTRILVMSQVLLSFGIALALVPLLIFTGNKSLMGDLVNTTLVKRIGWMIVVLVVALNLWLLIGTLLGL.

11 consecutive transmembrane segments (helical) span residues 19-39 (FALM…GNFA), 46-66 (ASFG…AMLI), 94-114 (VWFY…AEFI), 122-142 (LILG…TFLI), 155-175 (LVIG…LVFS), 196-216 (AVFL…IYLH), 241-261 (IAMT…AAAF), 290-310 (IFGL…TLAG), 329-349 (SVTM…TRIL), 350-370 (VMSQ…LLIF), and 389-409 (IGWM…IGTL).

It belongs to the NRAMP family.

It localises to the cell inner membrane. In terms of biological role, h(+)-stimulated, divalent metal cation uptake system. The polypeptide is Divalent metal cation transporter MntH (Enterobacter sp. (strain 638)).